Consider the following 344-residue polypeptide: Phosphoribosylformylglycinamidine cyclo-ligase (344 aa).

Belongs to the AIR synthase family.

It is found in the cytoplasm. It catalyses the reaction 2-formamido-N(1)-(5-O-phospho-beta-D-ribosyl)acetamidine + ATP = 5-amino-1-(5-phospho-beta-D-ribosyl)imidazole + ADP + phosphate + H(+). It participates in purine metabolism; IMP biosynthesis via de novo pathway; 5-amino-1-(5-phospho-D-ribosyl)imidazole from N(2)-formyl-N(1)-(5-phospho-D-ribosyl)glycinamide: step 2/2. This Haemophilus influenzae (strain PittGG) protein is Phosphoribosylformylglycinamidine cyclo-ligase.